Consider the following 449-residue polypeptide: Phosphoglucosamine mutase (449 aa).

The active-site Phosphoserine intermediate is the Ser-101. Ser-101, Asp-241, Asp-243, and Asp-245 together coordinate Mg(2+). Ser-101 is subject to Phosphoserine.

Belongs to the phosphohexose mutase family. Mg(2+) is required as a cofactor. Activated by phosphorylation.

The catalysed reaction is alpha-D-glucosamine 1-phosphate = D-glucosamine 6-phosphate. Its function is as follows. Catalyzes the conversion of glucosamine-6-phosphate to glucosamine-1-phosphate. This chain is Phosphoglucosamine mutase, found in Alkaliphilus oremlandii (strain OhILAs) (Clostridium oremlandii (strain OhILAs)).